An 889-amino-acid chain; its full sequence is Protein argonaute 15 (889 aa).

Disordered regions lie at residues 1 to 26 (MESH…SRKG) and 119 to 150 (EDAS…RMKR). Positions 122-132 (SSSGRTTTRRS) are enriched in low complexity. The region spanning 264–379 (PVIEFLLFNQ…IPLELCHLVP (116 aa)) is the PAZ domain. One can recognise a Piwi domain in the interval 546 to 853 (FVLCVLPERK…AAAQVSQFVR (308 aa)). Residues 857-878 (AASEGSGDGGAPPRPVPELPRL) form a disordered region.

It belongs to the argonaute family. Ago subfamily.

Its function is as follows. Probably involved in the RNA silencing pathway. May bind to short RNAs such as microRNAs (miRNAs) or short interfering RNAs (siRNAs), and represses the translation of mRNAs which are complementary to them. The polypeptide is Protein argonaute 15 (AGO15) (Oryza sativa subsp. japonica (Rice)).